The primary structure comprises 797 residues: Protocadherin-3 (797 aa).

The signal sequence occupies residues 1-30 (METALAKIPQQRQVFFLTILSLLWKSSSEA). The Extracellular segment spans residues 31–691 (IRYSMPEETE…DNYDVLTLYL (661 aa)). Cadherin domains follow at residues 35–133 (MPEE…SPEF), 138–242 (MLLT…SPQF), 247–346 (YKVQ…APEL), 351–450 (LTVL…APAF), and 455–560 (YTMF…APFV). 3 N-linked (GlcNAc...) asparagine glycosylation sites follow: N169, N276, and N417. An N-linked (GlcNAc...) asparagine glycan is attached at N566. Residues 567–670 (ASAPCTELLP…VVDGFSQPYL (104 aa)) enclose the Cadherin 6 domain. The helical transmembrane segment at 692-712 (VIALASVSSLFLLSVVLFVGV) threads the bilayer. Topologically, residues 713-797 (RLCRRAREAS…AVVHNSVGFY (85 aa)) are cytoplasmic.

In terms of tissue distribution, expressed in brain.

It is found in the cell membrane. In terms of biological role, potential calcium-dependent cell-adhesion protein. May be involved in the establishment and maintenance of specific neuronal connections in the brain. This chain is Protocadherin-3 (Pcdh3), found in Rattus norvegicus (Rat).